We begin with the raw amino-acid sequence, 208 residues long: Bacitracin transport permease protein BCRB (208 aa).

Transmembrane regions (helical) follow at residues 23-43 (LYIVLLIGVPLYGVITSYLFN), 70-90 (VLLLIWIMMLTLIAWVLTLLF), 111-131 (FMIGGALLFFLVSPIIFVTLL), 135-155 (YVPTIIFTIIISMVSIMVYGT), 159-179 (ALFPWSAVWVIASGTFFPEYP), and 182-202 (YSFISVAATTVLGLAATIVYF).

The protein resides in the cell membrane. Functionally, part of the binding-protein-dependent transport system for bacitracin that confer resistance to this antibiotic; probably responsible for the translocation of the substrate across the membrane. The protein is Bacitracin transport permease protein BCRB (bcrB) of Bacillus licheniformis.